The primary structure comprises 192 residues: Interleukin-18 (192 aa).

A propeptide spanning residues 1–35 (MAAEPVEDNCISFVEMKFINNTLYFVAENGDLESD) is cleaved from the precursor.

This sequence belongs to the IL-1 family. Forms a ternary complex with ligand-binding receptor subunit IL18R1 and signaling receptor subunit IL18RAP at the plasma membrane. Mature IL18 first binds to IL18R1 forming a low affinity binary complex, which then interacts with IL18RAP to form a high affinity ternary complex that signals inside the cell. Interacts with cargo receptor TMED10; the interaction mediates the translocation from the cytoplasm into the ERGIC (endoplasmic reticulum-Golgi intermediate compartment) and thereby secretion. The pro-IL-18 precursor is processed by CASP1, CASP4 or CASP5 to yield its mature, active form. The pro-IL-18 precursor features autoinhibitory interactions between the propeptide and the post-cleavage-site region, preventing recognition by the IL18R1 receptor. Processing by CASP1, CASP4 or CASP5 induces conformational changes to generate critical receptor-binding sites. The mature form is then secreted and released in the extracellular milieu by passing through the gasdermin-D (GSDMD) pore. In contrast, cleavage by CASP3 inactivates IL18.

The protein resides in the cytoplasm. The protein localises to the cytosol. It localises to the secreted. In terms of biological role, pro-inflammatory cytokine primarily involved in epithelial barrier repair, polarized T-helper 1 (Th1) cell and natural killer (NK) cell immune responses. Upon binding to IL18R1 and IL18RAP, forms a signaling ternary complex which activates NF-kappa-B, triggering synthesis of inflammatory mediators. Synergizes with IL12/interleukin-12 to induce IFNG synthesis from T-helper 1 (Th1) cells and natural killer (NK) cells. Involved in transduction of inflammation downstream of pyroptosis: its mature form is specifically released in the extracellular milieu by passing through the gasdermin-D (GSDMD) pore. This chain is Interleukin-18 (IL18), found in Capra hircus (Goat).